The chain runs to 226 residues: PKHD-type hydroxylase TERTU_2553 (226 aa).

Residues 78 to 177 enclose the Fe2OG dioxygenase domain; the sequence is KIYPPKFNCY…RVASFIWIQS (100 aa). Fe cation is bound by residues His96, Asp98, and His158. Position 168 (Arg168) interacts with 2-oxoglutarate.

It depends on Fe(2+) as a cofactor. Requires L-ascorbate as cofactor.

In Teredinibacter turnerae (strain ATCC 39867 / T7901), this protein is PKHD-type hydroxylase TERTU_2553.